The chain runs to 78 residues: Putative antitoxin VapB4 (78 aa).

It belongs to the UPF0330 family.

Its function is as follows. Possibly the antitoxin component of a type II toxin-antitoxin (TA) system. Its cognate toxin is VapC4 (Potential). The polypeptide is Putative antitoxin VapB4 (vapB4) (Pyrococcus furiosus (strain ATCC 43587 / DSM 3638 / JCM 8422 / Vc1)).